A 210-amino-acid chain; its full sequence is Chloramphenicol acetyltransferase (210 aa).

His79 is a catalytic residue.

It belongs to the transferase hexapeptide repeat family.

It carries out the reaction chloramphenicol + acetyl-CoA = chloramphenicol 3-acetate + CoA. In terms of biological role, this enzyme is an effector of chloramphenicol resistance in bacteria. The sequence is that of Chloramphenicol acetyltransferase (catB4) from Klebsiella aerogenes (Enterobacter aerogenes).